The chain runs to 250 residues: Ribosomal RNA small subunit methyltransferase J (250 aa).

Residues 101–102 (RD), 117–118 (ER), 153–154 (SS), and Asp-171 each bind S-adenosyl-L-methionine.

This sequence belongs to the methyltransferase superfamily. RsmJ family.

Its subcellular location is the cytoplasm. The enzyme catalyses guanosine(1516) in 16S rRNA + S-adenosyl-L-methionine = N(2)-methylguanosine(1516) in 16S rRNA + S-adenosyl-L-homocysteine + H(+). Specifically methylates the guanosine in position 1516 of 16S rRNA. This Escherichia coli (strain UTI89 / UPEC) protein is Ribosomal RNA small subunit methyltransferase J.